The chain runs to 396 residues: CCA-adding enzyme (396 aa).

2 residues coordinate ATP: Gly27 and Arg30. 2 residues coordinate CTP: Gly27 and Arg30. Mg(2+)-binding residues include Asp40 and Asp42. Positions 111, 154, 157, 160, and 163 each coordinate ATP. CTP contacts are provided by Arg111, Asp154, Arg157, Arg160, and Arg163.

Belongs to the tRNA nucleotidyltransferase/poly(A) polymerase family. Bacterial CCA-adding enzyme type 3 subfamily. Homodimer. It depends on Mg(2+) as a cofactor.

It carries out the reaction a tRNA precursor + 2 CTP + ATP = a tRNA with a 3' CCA end + 3 diphosphate. The enzyme catalyses a tRNA with a 3' CCA end + 2 CTP + ATP = a tRNA with a 3' CCACCA end + 3 diphosphate. Its function is as follows. Catalyzes the addition and repair of the essential 3'-terminal CCA sequence in tRNAs without using a nucleic acid template. Adds these three nucleotides in the order of C, C, and A to the tRNA nucleotide-73, using CTP and ATP as substrates and producing inorganic pyrophosphate. tRNA 3'-terminal CCA addition is required both for tRNA processing and repair. Also involved in tRNA surveillance by mediating tandem CCA addition to generate a CCACCA at the 3' terminus of unstable tRNAs. While stable tRNAs receive only 3'-terminal CCA, unstable tRNAs are marked with CCACCA and rapidly degraded. This Bacillus velezensis (strain DSM 23117 / BGSC 10A6 / LMG 26770 / FZB42) (Bacillus amyloliquefaciens subsp. plantarum) protein is CCA-adding enzyme.